The chain runs to 338 residues: Sporulation protein YdcC (338 aa).

A helical membrane pass occupies residues 8-25; that stretch reads FVLLLTGLLAVLILSACG.

It localises to the cell membrane. Its function is as follows. required for efficient sporulation. This is Sporulation protein YdcC (ydcC) from Bacillus subtilis (strain 168).